We begin with the raw amino-acid sequence, 251 residues long: uncharacterized protein (251 aa).

10–34 (ITGAGSGIGKKAAVMFAERGAKVAI) is a binding site for NADP(+). A substrate-binding site is contributed by Ser-139. Catalysis depends on Tyr-152, which acts as the Proton acceptor.

It belongs to the short-chain dehydrogenases/reductases (SDR) family.

This is an uncharacterized protein from Thermotoga maritima (strain ATCC 43589 / DSM 3109 / JCM 10099 / NBRC 100826 / MSB8).